We begin with the raw amino-acid sequence, 95 residues long: Putative regulatory protein Daud_1598 (95 aa).

It belongs to the RemA family.

The polypeptide is Putative regulatory protein Daud_1598 (Desulforudis audaxviator (strain MP104C)).